The sequence spans 123 residues: Large-conductance mechanosensitive channel (123 aa).

Helical transmembrane passes span 14 to 34 (VIDMAVGIIVGAAFTSIVKSL) and 67 to 87 (GSFLNAVINFLIISFVVFLMV).

The protein belongs to the MscL family. In terms of assembly, homopentamer.

The protein localises to the cell membrane. Channel that opens in response to stretch forces in the membrane lipid bilayer. May participate in the regulation of osmotic pressure changes within the cell. The sequence is that of Large-conductance mechanosensitive channel from Limosilactobacillus reuteri (strain DSM 20016) (Lactobacillus reuteri).